Reading from the N-terminus, the 271-residue chain is Phosphate import ATP-binding protein PstB (271 aa).

The ABC transporter domain occupies 25 to 266; the sequence is FDTKNLNLWY…PSDKRTEDYI (242 aa). 57–64 contacts ATP; the sequence is GPSGCGKS.

The protein belongs to the ABC transporter superfamily. Phosphate importer (TC 3.A.1.7) family. As to quaternary structure, the complex is composed of two ATP-binding proteins (PstB), two transmembrane proteins (PstC and PstA) and a solute-binding protein (PstS).

The protein localises to the cell membrane. The enzyme catalyses phosphate(out) + ATP + H2O = ADP + 2 phosphate(in) + H(+). Functionally, part of the ABC transporter complex PstSACB involved in phosphate import. Responsible for energy coupling to the transport system. The chain is Phosphate import ATP-binding protein PstB from Bacillus cereus (strain ATCC 14579 / DSM 31 / CCUG 7414 / JCM 2152 / NBRC 15305 / NCIMB 9373 / NCTC 2599 / NRRL B-3711).